A 157-amino-acid chain; its full sequence is Crossover junction endodeoxyribonuclease RuvC (157 aa).

Active-site residues include aspartate 7, glutamate 66, and aspartate 139. Mg(2+)-binding residues include aspartate 7, glutamate 66, and aspartate 139.

Belongs to the RuvC family. As to quaternary structure, homodimer which binds Holliday junction (HJ) DNA. The HJ becomes 2-fold symmetrical on binding to RuvC with unstacked arms; it has a different conformation from HJ DNA in complex with RuvA. In the full resolvosome a probable DNA-RuvA(4)-RuvB(12)-RuvC(2) complex forms which resolves the HJ. Requires Mg(2+) as cofactor.

The protein resides in the cytoplasm. It catalyses the reaction Endonucleolytic cleavage at a junction such as a reciprocal single-stranded crossover between two homologous DNA duplexes (Holliday junction).. The RuvA-RuvB-RuvC complex processes Holliday junction (HJ) DNA during genetic recombination and DNA repair. Endonuclease that resolves HJ intermediates. Cleaves cruciform DNA by making single-stranded nicks across the HJ at symmetrical positions within the homologous arms, yielding a 5'-phosphate and a 3'-hydroxyl group; requires a central core of homology in the junction. The consensus cleavage sequence is 5'-(A/T)TT(C/G)-3'. Cleavage occurs on the 3'-side of the TT dinucleotide at the point of strand exchange. HJ branch migration catalyzed by RuvA-RuvB allows RuvC to scan DNA until it finds its consensus sequence, where it cleaves and resolves the cruciform DNA. In terms of biological role, required for efficient infection in a mouse model system. The polypeptide is Crossover junction endodeoxyribonuclease RuvC (Helicobacter pylori (strain G27)).